Reading from the N-terminus, the 166-residue chain is Probable RNA-binding protein EIF1AD (166 aa).

The S1-like domain maps to 5–89 (TKRKHVVKEV…VKAEISFVLC (85 aa)). The short motif at 6 to 12 (KRKHVVK) is the Nuclear localization signal element. Residue Thr33 is modified to Phosphothreonine. The Nuclear localization signal motif lies at 56–65 (KYRKNIWIKR). The segment at 99 to 166 (DGHWPEAFSQ…EEESEEEEAA (68 aa)) is disordered. Over residues 110 to 119 (TEKDNNDRNR) the composition is skewed to basic and acidic residues. 6 positions are modified to phosphoserine: Ser132, Ser136, Ser137, Ser138, Ser156, and Ser160. Residues 156–166 (SEEESEEEEAA) show a composition bias toward acidic residues.

The protein belongs to the EIF1AD family. In terms of assembly, interacts with GAPDH and STAT1.

Its subcellular location is the nucleus. In terms of biological role, plays a role into cellular response to oxidative stress. Decreases cell proliferation. This chain is Probable RNA-binding protein EIF1AD (EIF1AD), found in Bos taurus (Bovine).